A 259-amino-acid chain; its full sequence is DNA adenine methylase (259 aa).

S-adenosyl-L-methionine-binding positions include tyrosine 7, lysine 11, phenylalanine 32–serine 37, aspartate 50, histidine 156–phenylalanine 157, aspartate 171, and tyrosine 181.

It belongs to the N(4)/N(6)-methyltransferase family. As to quaternary structure, monomer.

The enzyme catalyses a 2'-deoxyadenosine in DNA + S-adenosyl-L-methionine = an N(6)-methyl-2'-deoxyadenosine in DNA + S-adenosyl-L-homocysteine + H(+). An alpha subtype methylase, recognizes the double-stranded sequence 5'-GATC-3' and methylates A-2. Also acts on 5-hydroxymethylcytosine (hmC)-containing DNA, the normal base in this virus. May prevent degradation of viral DNA by the host restriction-modification antiviral defense system. This is DNA adenine methylase from Enterobacteria phage T4 (Bacteriophage T4).